The sequence spans 22 residues: Chymotrypsin inhibitor (22 aa).

The tract at residues 1–22 is disordered; it reads FDESFGFQGPSTYEKTPLGEPA.

In terms of tissue distribution, hemolymph.

Its subcellular location is the secreted. The protein localises to the extracellular space. In terms of biological role, inhibits chymotrypsin stoichiometrically. Also inhibits porcine pancreatic elastase and trypsin. This chain is Chymotrypsin inhibitor, found in Mythimna unipuncta (Armyworm moth).